A 358-amino-acid chain; its full sequence is Histamine H2 receptor (358 aa).

Residues 1–22 (MEPNGTVHSCCLDSMALKVTIS) are Extracellular-facing. Asparagine 4 carries an N-linked (GlcNAc...) asparagine glycan. The helical transmembrane segment at 23–44 (VVLTTLILITIAGNVVVCLAVS) threads the bilayer. Topologically, residues 45-57 (LNRRLRSLTNCFI) are cytoplasmic. A helical membrane pass occupies residues 58–81 (VSLAATDLLLGLLVLPFSAIYQLS). Topologically, residues 82 to 92 (FTWSFGHVFCN) are extracellular. Cysteine 91 and cysteine 173 are disulfide-bonded. The helical transmembrane segment at 93 to 114 (IYTSLDVMLCTASILNLFMISL) threads the bilayer. Topologically, residues 115-134 (DRYCAVTDPLRYPVLVTPVR) are cytoplasmic. A helical transmembrane segment spans residues 135 to 159 (VAISLVFIWVISITLSFLSIHLGWN). Topologically, residues 160–179 (SRNGTRGGNDTFKCKVQVNE) are extracellular. A helical transmembrane segment spans residues 180-203 (VYGLVDGLVTFYLPLLIMCVTYYR). Residues 204-233 (IFKIAREQAKRINHISSWKAATIREHKATV) are Cytoplasmic-facing. A helical membrane pass occupies residues 234–257 (TLAAVMGAFIICWFPYFTAFVYRG). Residues 258–266 (LRGDDAINE) are Extracellular-facing. A helical membrane pass occupies residues 267-288 (AVEGIVLWLGYANSALNPILYA). Residues 289–358 (ALNRDFRTAY…LTHPQGNPIR (70 aa)) lie on the Cytoplasmic side of the membrane. Cysteine 304 carries S-palmitoyl cysteine lipidation.

The protein belongs to the G-protein coupled receptor 1 family.

Its subcellular location is the cell membrane. The H2 subclass of histamine receptors mediates gastric acid secretion. The activity of this receptor is mediated by G proteins which activate adenylyl cyclase. This chain is Histamine H2 receptor (Hrh2), found in Rattus norvegicus (Rat).